A 55-amino-acid polypeptide reads, in one-letter code: ATP synthase F(0) complex subunit 8 (55 aa).

Residues 4–24 (LNPAPWFAILVFSWLVFLTVI) traverse the membrane as a helical segment. Residues 34 to 55 (TNEPTSQSTEKAKPEPWNWPWH) are disordered.

It belongs to the ATPase protein 8 family. As to quaternary structure, component of the ATP synthase complex composed at least of ATP5F1A/subunit alpha, ATP5F1B/subunit beta, ATP5MC1/subunit c (homooctomer), MT-ATP6/subunit a, MT-ATP8/subunit 8, ATP5ME/subunit e, ATP5MF/subunit f, ATP5MG/subunit g, ATP5MK/subunit k, ATP5MJ/subunit j, ATP5F1C/subunit gamma, ATP5F1D/subunit delta, ATP5F1E/subunit epsilon, ATP5PF/subunit F6, ATP5PB/subunit b, ATP5PD/subunit d, ATP5PO/subunit OSCP. ATP synthase complex consists of a soluble F(1) head domain (subunits alpha(3) and beta(3)) - the catalytic core - and a membrane F(0) domain - the membrane proton channel (subunits c, a, 8, e, f, g, k and j). These two domains are linked by a central stalk (subunits gamma, delta, and epsilon) rotating inside the F1 region and a stationary peripheral stalk (subunits F6, b, d, and OSCP).

It is found in the mitochondrion membrane. Functionally, subunit 8, of the mitochondrial membrane ATP synthase complex (F(1)F(0) ATP synthase or Complex V) that produces ATP from ADP in the presence of a proton gradient across the membrane which is generated by electron transport complexes of the respiratory chain. ATP synthase complex consist of a soluble F(1) head domain - the catalytic core - and a membrane F(1) domain - the membrane proton channel. These two domains are linked by a central stalk rotating inside the F(1) region and a stationary peripheral stalk. During catalysis, ATP synthesis in the catalytic domain of F(1) is coupled via a rotary mechanism of the central stalk subunits to proton translocation. In vivo, can only synthesize ATP although its ATP hydrolase activity can be activated artificially in vitro. Part of the complex F(0) domain. This is ATP synthase F(0) complex subunit 8 from Oncorhynchus mykiss (Rainbow trout).